Here is a 216-residue protein sequence, read N- to C-terminus: MPIQVVSADFDKTATRPEEWPRGATPEIAFVGRSNVGKSSMLNALARRKGLARVSSTPGRTRALQFFDLSYRPTPAARPRAIRFCDLPGYGYAKVSRAERDRWTAMIEDYLRDRDVLRAVVLIVDARHAPSESDEDAAAFLVSAGRRLVVAATKTDKLPKARRVLALQQVERALGLARGDAVPFSAVEGTGTDALWARLAALAAEEARTAEADPPA.

The 182-residue stretch at 24–205 folds into the EngB-type G domain; the sequence is ATPEIAFVGR…WARLAALAAE (182 aa). GTP-binding positions include 32–39, 59–63, 86–89, 153–156, and 184–186; these read GRSNVGKS, GRTRA, DLPG, TKTD, and FSA. Ser39 and Thr61 together coordinate Mg(2+).

It belongs to the TRAFAC class TrmE-Era-EngA-EngB-Septin-like GTPase superfamily. EngB GTPase family. The cofactor is Mg(2+).

Its function is as follows. Necessary for normal cell division and for the maintenance of normal septation. The sequence is that of Probable GTP-binding protein EngB from Anaeromyxobacter dehalogenans (strain 2CP-C).